A 486-amino-acid chain; its full sequence is 3-dehydroshikimate dehydratase (486 aa).

The catalysed reaction is 3-dehydroshikimate = 3,4-dihydroxybenzoate + H2O. Its pathway is aromatic compound metabolism; 3,4-dihydroxybenzoate biosynthesis; 3,4-dihydroxybenzoate from 3-dehydroquinate: step 2/2. Its function is as follows. Converts dehydroshikimate to protocatechuate. The polypeptide is 3-dehydroshikimate dehydratase (quiC) (Acinetobacter baylyi (strain ATCC 33305 / BD413 / ADP1)).